The primary structure comprises 271 residues: 3-methyl-2-oxobutanoate hydroxymethyltransferase (271 aa).

Residues Asp-53 and Asp-92 each contribute to the Mg(2+) site. 3-methyl-2-oxobutanoate-binding positions include 53-54 (DS), Asp-92, and Lys-120. A Mg(2+)-binding site is contributed by Glu-122. Glu-189 serves as the catalytic Proton acceptor.

This sequence belongs to the PanB family. In terms of assembly, homodecamer; pentamer of dimers. Mg(2+) serves as cofactor.

It is found in the cytoplasm. It catalyses the reaction 3-methyl-2-oxobutanoate + (6R)-5,10-methylene-5,6,7,8-tetrahydrofolate + H2O = 2-dehydropantoate + (6S)-5,6,7,8-tetrahydrofolate. The protein operates within cofactor biosynthesis; (R)-pantothenate biosynthesis; (R)-pantoate from 3-methyl-2-oxobutanoate: step 1/2. In terms of biological role, catalyzes the reversible reaction in which hydroxymethyl group from 5,10-methylenetetrahydrofolate is transferred onto alpha-ketoisovalerate to form ketopantoate. This is 3-methyl-2-oxobutanoate hydroxymethyltransferase from Burkholderia multivorans (strain ATCC 17616 / 249).